A 644-amino-acid polypeptide reads, in one-letter code: Chaperone protein DnaK (644 aa).

Position 195 is a phosphothreonine; by autocatalysis (Thr-195). Residues 598–644 are disordered; that stretch reads KQAAPGAGAPGAGPGPEAAGGAQQAQAEPKKDEGVIDAEYVDVDEKK. Low complexity predominate over residues 612 to 624; the sequence is GPEAAGGAQQAQA. Acidic residues predominate over residues 632–644; sequence VIDAEYVDVDEKK.

Belongs to the heat shock protein 70 family.

Its function is as follows. Acts as a chaperone. The chain is Chaperone protein DnaK from Koribacter versatilis (strain Ellin345).